The chain runs to 343 residues: Methionine import ATP-binding protein MetN 1 (343 aa).

The ABC transporter domain occupies 2-241 (IKLSNITKVF…PKTPLAQKFI (240 aa)). 38 to 45 (GASGAGKS) contacts ATP.

This sequence belongs to the ABC transporter superfamily. Methionine importer (TC 3.A.1.24) family. As to quaternary structure, the complex is composed of two ATP-binding proteins (MetN), two transmembrane proteins (MetI) and a solute-binding protein (MetQ).

Its subcellular location is the cell inner membrane. It carries out the reaction L-methionine(out) + ATP + H2O = L-methionine(in) + ADP + phosphate + H(+). It catalyses the reaction D-methionine(out) + ATP + H2O = D-methionine(in) + ADP + phosphate + H(+). Part of the ABC transporter complex MetNIQ involved in methionine import. Responsible for energy coupling to the transport system. The chain is Methionine import ATP-binding protein MetN 1 from Salmonella typhimurium (strain LT2 / SGSC1412 / ATCC 700720).